The chain runs to 212 residues: Ribonuclease HII (212 aa).

The 206-residue stretch at 1 to 206 (MICGVDEAGK…VKNLLHQKNQ (206 aa)) folds into the RNase H type-2 domain. A divalent metal cation contacts are provided by D6, E7, and D101.

This sequence belongs to the RNase HII family. Mn(2+) serves as cofactor. It depends on Mg(2+) as a cofactor.

It is found in the cytoplasm. The catalysed reaction is Endonucleolytic cleavage to 5'-phosphomonoester.. In terms of biological role, endonuclease that specifically degrades the RNA of RNA-DNA hybrids. The protein is Ribonuclease HII of Methanospirillum hungatei JF-1 (strain ATCC 27890 / DSM 864 / NBRC 100397 / JF-1).